We begin with the raw amino-acid sequence, 1218 residues long: NACHT, LRR and PYD domains-containing protein 1 allele 2 (1218 aa).

The disordered stretch occupies residues Met1 to Lys61. A compositionally biased stretch (polar residues) spans Lys7–Thr29. One can recognise an NACHT domain in the interval Gln175 to Leu484. Gly181–Ser188 contacts ATP. LRR repeat units lie at residues Lys343 to Cys364, Asn673 to Cys693, and Arg730 to Cys750. Positions Thr799–Lys815 are enriched in polar residues. Residues Thr799–Val842 form a disordered region. A ZU5 region spans residues Phe835–Phe968. Residues Phe835–Ser1118 enclose the FIIND domain. The interval Ser969 to Ser1118 is UPA. The CARD domain occupies Asp1122–Ser1211.

The protein belongs to the NLRP family. Interacts (via LRR repeats) with BCL2 and BCL2L1 (via the loop between motifs BH4 and BH3). Interacts with NOD2; this interaction is enhanced in the presence of muramyl dipeptide (MDP) and increases IL1B release. Interacts with EIF2AK2/PKR; this interaction requires EIF2AK2 activity, is accompanied by EIF2AK2 autophosphorylation and promotes inflammasome assembly in response to danger-associated signals. Interacts with MEFV; this interaction targets Nlrp1a to degradation by autophagy, hence preventing excessive IL1B- and IL18-mediated inflammation. Interacts with DPP9; leading to inhibit activation of the inflammasome. DPP9 acts via formation of a ternary complex, composed of a DPP9 homodimer, one full-length NLRP1 protein, and one cleaved C-terminus of Nlrp1a (NACHT, LRR and PYD domains-containing protein 1a, C-terminus). Interacts with DPP8; leading to inhibit activation of the inflammasome, probably via formation of a ternary complex with DPP8. As to quaternary structure, interacts with the C-terminal part of Nlrp1a (NACHT, LRR and PYD domains-containing protein 1a, C-terminus) in absence of pathogens and other damage-associated signals. In terms of assembly, interacts with the N-terminal part of Nlrp1a (NACHT, LRR and PYD domains-containing protein 1a, N-terminus) in absence of pathogens and other damage-associated signals. Homomultimer; forms the Nlrp1a inflammasome polymeric complex, a filament composed of homopolymers of this form in response to pathogens and other damage-associated signals. The Nlrp1a inflammasome polymeric complex directly recruits pro-caspase-1 (proCASP1) independently of PYCARD/ASC. Interacts (via CARD domain) with CASP1 (via CARD domain); leading to CASP1 activation. Autocatalytically cleaved. Autocatalytic cleavage in FIIND region occurs constitutively, prior to activation signals, and is required for inflammasome activity (IL1B release), possibly by facilitating CASP1 binding. Both N- and C-terminal parts remain associated non-covalently. In terms of processing, (Microbial infection) Cleavage by B.anthracis lethal toxin (LT) endopeptidase promotes ubiquitination and degradation of the N-terminal part, releasing the cleaved C-terminal part of the protein (NACHT, LRR and PYD domains-containing protein 1a, C-terminus), which polymerizes and forms the Nlrp1a inflammasome. Post-translationally, ubiquitinated in response to pathogen-associated signals, leading to its degradation by the proteasome and subsequent release of the cleaved C-terminal part of the protein (NACHT, LRR and PYD domains-containing protein 1a, C-terminus), which polymerizes and forms the Nlrp1a inflammasome.

It localises to the cytoplasm. Its subcellular location is the cytosol. The protein localises to the nucleus. The protein resides in the inflammasome. Its activity is regulated as follows. Activated by cleavage by B.anthracis lethal toxin (LT) endopeptidase. Cleavage by LT promotes ubiquitination and degradation of the N-terminal part, releasing the cleaved C-terminal part of the protein (NACHT, LRR and PYD domains-containing protein 1a, C-terminus), which polymerizes and forms the Nlrp1a inflammasome. Nlrp1a inflammasome is inhibited by DPP8 and DPP9, which sequester the C-terminal fragment of Nlrp1a (NACHT, LRR and PYD domains-containing protein 1a, C-terminus) in a ternary complex, thereby preventing Nlrp1a oligomerization and activation. Nlrp1a inflammasome is weakly activated by Val-boroPro (Talabostat, PT-100), an inhibitor of dipeptidyl peptidases DPP8 and DPP9. Val-boroPro relieves inhibition of DPP8 and/or DPP9 by promoting disruption of the ternary complex, releasing its C-terminal part from autoinhibition. Weakly activated by Toxoplasma gondii. Functionally, acts as the sensor component of the Nlrp1a inflammasome, which mediates inflammasome activation in response to various pathogen-associated signals, leading to subsequent pyroptosis. Inflammasomes are supramolecular complexes that assemble in the cytosol in response to pathogens and other damage-associated signals and play critical roles in innate immunity and inflammation. Acts as a recognition receptor (PRR): recognizes specific pathogens and other damage-associated signals, such as B.anthracis lethal toxin (LT) or Val-boroPro inhibitor, and mediates the formation of the inflammasome polymeric complex. In response to pathogen-associated signals, the N-terminal part of Nlrp1a is degraded by the proteasome, releasing the cleaved C-terminal part of the protein (NACHT, LRR and PYD domains-containing protein 1a, C-terminus), which polymerizes to initiate the formation of the inflammasome complex: the inflammasome directly recruits pro-caspase-1 (proCASP1) independently of PYCARD/ASC and promotes caspase-1 (CASP1) activation, which subsequently cleaves and activates inflammatory cytokines IL1B and IL18 and gasdermin-D (GSDMD), leading to pyroptosis. In the absence of GSDMD expression, the Nlrp1a inflammasome is able to recruit and activate CASP8, leading to activation of gasdermin-E (GSDME). Constitutes the precursor of the Nlrp1a inflammasome, which mediates autoproteolytic processing within the FIIND domain to generate the N-terminal and C-terminal parts, which are associated non-covalently in absence of pathogens and other damage-associated signals. In terms of biological role, regulatory part that prevents formation of the Nlrp1a inflammasome: in absence of pathogens and other damage-associated signals, interacts with the C-terminal part of Nlrp1a (NACHT, LRR and PYD domains-containing protein 1a, C-terminus), preventing activation of the Nlrp1a inflammasome. In response to pathogen-associated signals, this part is ubiquitinated by the N-end rule pathway and degraded by the proteasome, releasing the cleaved C-terminal part of the protein, which polymerizes and forms the Nlrp1a inflammasome. Its function is as follows. Constitutes the active part of the Nlrp1a inflammasome. In absence of pathogens and other damage-associated signals, interacts with the N-terminal part of Nlrp1a (NACHT, LRR and PYD domains-containing protein 1a, N-terminus), preventing activation of the Nlrp1a inflammasome. In response to pathogen-associated signals, the N-terminal part of Nlrp1a is degraded by the proteasome, releasing this form, which polymerizes to form the Nlrp1a inflammasome complex: the Nlrp1a inflammasome complex then directly recruits pro-caspase-1 (proCASP1) and promotes caspase-1 (CASP1) activation, leading to gasdermin-D (GSDMD) cleavage and subsequent pyroptosis. This is NACHT, LRR and PYD domains-containing protein 1 allele 2 from Rattus norvegicus (Rat).